The following is a 72-amino-acid chain: Probable neurotoxin pcD-996 (72 aa).

The N-terminal stretch at 1-19 is a signal peptide; sequence MNYLVMISFALLLVIGVES. Positions 21–72 constitute an LCN-type CS-alpha/beta domain; it reads RDGYFVEPDNCLVYCMPSPEICDRGCKRYGATSGFCKEFSKGENFCWCKGLR. Cystine bridges form between Cys35-Cys56, Cys42-Cys66, and Cys46-Cys68. A propeptide (removed by a carboxypeptidase) is located at residue Arg72.

This sequence belongs to the long (3 C-C) scorpion toxin superfamily. Expressed by the venom gland.

The protein localises to the secreted. The polypeptide is Probable neurotoxin pcD-996 (Androctonus australis (Sahara scorpion)).